A 272-amino-acid polypeptide reads, in one-letter code: MTDVSAAASRPAVPPSVIDPDAPAKVAARNLNFYYGQHQALKNINLSIAANRVTAFIGPSGCGKSTLLRVFNRMYDLYPGQRVEGQVLLDNTDILDPRLDLNLLRARVGMVFQKPTPFPMTIYENIAFGIRLYEKLSKSEMDDRVEKALQGGALWNEVKDKLNASGLSLSGGQQQRLCIARTVALRPEVILFDEPCSALDPISTAKIEGLIDELKEHYTIAIVTHNMQQAARVSDTTAFMYLGEMVEFGPTNKVFTSPADRRTQDYITGRFG.

The ABC transporter domain maps to 26–267 (VAARNLNFYY…PADRRTQDYI (242 aa)). Position 58–65 (58–65 (GPSGCGKS)) interacts with ATP.

The protein belongs to the ABC transporter superfamily. Phosphate importer (TC 3.A.1.7) family. The complex is composed of two ATP-binding proteins (PstB), two transmembrane proteins (PstC and PstA) and a solute-binding protein (PstS).

The protein resides in the cell inner membrane. The enzyme catalyses phosphate(out) + ATP + H2O = ADP + 2 phosphate(in) + H(+). Functionally, part of the ABC transporter complex PstSACB involved in phosphate import. Responsible for energy coupling to the transport system. This chain is Phosphate import ATP-binding protein PstB, found in Nitrobacter hamburgensis (strain DSM 10229 / NCIMB 13809 / X14).